The sequence spans 73 residues: UPF0346 protein lp_1865 (73 aa).

The protein belongs to the UPF0346 family.

The sequence is that of UPF0346 protein lp_1865 from Lactiplantibacillus plantarum (strain ATCC BAA-793 / NCIMB 8826 / WCFS1) (Lactobacillus plantarum).